Consider the following 491-residue polypeptide: Cytochrome P450 2F2 (491 aa).

Residue cysteine 436 participates in heme binding.

This sequence belongs to the cytochrome P450 family. Heme serves as cofactor.

It localises to the endoplasmic reticulum membrane. Its subcellular location is the microsome membrane. In terms of biological role, involved in the regio- and stereoselective transformation of naphthalene to trans-1R-hydroxy-2R-glutathionyl-1,2-dihydronaphthalene in the presence of glutathione and glutathione S-transferases. It specifically catalyzes the production of a very reactive and potentially toxic intermediate, the 2R,2S arene oxide, that is associated with necrosis of the unciliated bronchiolar epithelial cells or club cells in lung. In Rattus norvegicus (Rat), this protein is Cytochrome P450 2F2 (Cyp2f2).